We begin with the raw amino-acid sequence, 238 residues long: Ribosomal RNA small subunit methyltransferase G (238 aa).

Residues Gly77, Phe82, 128–129 (AE), and Arg147 each bind S-adenosyl-L-methionine. Positions 219–238 (RQTPKKYPRKAGLPNKEPIE) are disordered.

This sequence belongs to the methyltransferase superfamily. RNA methyltransferase RsmG family.

The protein resides in the cytoplasm. Functionally, specifically methylates the N7 position of guanine in position 535 of 16S rRNA. The polypeptide is Ribosomal RNA small subunit methyltransferase G (Oceanobacillus iheyensis (strain DSM 14371 / CIP 107618 / JCM 11309 / KCTC 3954 / HTE831)).